The sequence spans 970 residues: Cullin-4B (970 aa).

The segment covering 1–14 (MSRSTRSKERREND) has biased composition (basic and acidic residues). Disordered stretches follow at residues 1 to 157 (MSRS…SFCL) and 189 to 211 (AEES…QQQQ). Residue Thr15 is modified to Phosphothreonine. Phosphoserine is present on Ser17. Positions 36 to 57 (PPRPPYPPLLPPVFPPPTPPPQ) are enriched in pro residues. The segment covering 78 to 98 (SGFSSPNPSAASAAAQEVRSA) has biased composition (low complexity). Polar residues predominate over residues 99–109 (TDGNTSTTPPT). Thr106 is modified (phosphothreonine). At Ser110 the chain carries Phosphoserine. The Nuclear localization signal motif lies at 112–115 (KKRK). Residues 117-126 (NSSSSSSNSS) show a composition bias toward low complexity. Residues 146–155 (DSASPSTSSF) show a composition bias toward polar residues. Phosphoserine is present on residues Ser154 and Ser200. Low complexity predominate over residues 192–211 (SSSSSSSSSPTAATSQQQQQ). Position 202 is a phosphothreonine (Thr202). A Glycyl lysine isopeptide (Lys-Gly) (interchain with G-Cter in ubiquitin) cross-link involves residue Lys247. Ser250 carries the post-translational modification Phosphoserine. Residues 902 to 962 (DRQYQIDAAI…RDYMERDKEN (61 aa)) form the Cullin neddylation domain. Residue Lys916 forms a Glycyl lysine isopeptide (Lys-Gly) (interchain with G-Cter in NEDD8) linkage.

This sequence belongs to the cullin family. In terms of assembly, component of multiple DCX (DDB1-CUL4-X-box) E3 ubiquitin-protein ligase complexes that seem to be formed of DDB1, CUL4A or CUL4B, RBX1 and a variable substrate recognition component which seems to belong to a protein family described as DCAF (Ddb1- and Cul4-associated factor) or CDW (CUL4-DDB1-associated WD40-repeat) proteins. Component of the DCX(DTL) complex with the putative substrate recognition component DTL. Component of the DCX(DDB2) complex with the putative substrate recognition component DDB2. Component of DCX complexes part of the DesCEND (destruction via C-end degrons) pathway, which contain either TRPC4AP or DCAF12 as substrate-recognition component. Component of the DCX(AMBRA1) complex with the substrate recognition component AMBRA1. Part of a complex with RBX1 and TIP120A/CAND1. Component of the DCX(WDR77) complex, composed of Cul4b, Ddb1, Wdr77 and Rbx1. Interacts with RBX1, GRWD1, MLST8, SMU1, TLE2, TLE3, DCAF1, DDA1, DCAF6, DCAF17, DDB2, DCAF8, TIP120A/CAND1 and TMEM113. Interacts with cyclin E (CCNE1 or CCNE2) and with importins alpha-1 (KPNA2), alpha-3 (KPNA4), alpha-5 (KPNA1) and beta-1 (KPNB1). May interact with WDR26, WDR51B, SNRNP40, WDR61, WDR76 and WDR5. Interacts (unneddylated form) with DCUN1D1, DCUN1D2, DCUN1D3, DCUN1D4 and DCUN1D5; these interactions promote the cullin neddylation. Post-translationally, neddylated. Deneddylated via its interaction with the COP9 signalosome (CSN) complex. As to expression, expressed in oocytes (at protein level).

The protein localises to the cytoplasm. It localises to the nucleus. Its pathway is protein modification; protein ubiquitination. Core component of multiple cullin-RING-based E3 ubiquitin-protein ligase complexes which mediate the ubiquitination and subsequent proteasomal degradation of target proteins. The functional specificity of the E3 ubiquitin-protein ligase complex depends on the variable substrate recognition subunit. CUL4B may act within the complex as a scaffold protein, contributing to catalysis through positioning of the substrate and the ubiquitin-conjugating enzyme. Plays a role as part of the E3 ubiquitin-protein ligase complex in polyubiquitination of CDT1, histone H2A, histone H3 and histone H4 in response to radiation-induced DNA damage. Targeted to UV damaged chromatin by DDB2 and may be important for DNA repair and DNA replication. A number of DCX complexes (containing either TRPC4AP or DCAF12 as substrate-recognition component) are part of the DesCEND (destruction via C-end degrons) pathway, which recognizes a C-degron located at the extreme C terminus of target proteins, leading to their ubiquitination and degradation. The DCX(AMBRA1) complex is a master regulator of the transition from G1 to S cell phase by mediating ubiquitination of phosphorylated cyclin-D (CCND1, CCND2 and CCND3). The DCX(AMBRA1) complex also acts as a regulator of Cul5-RING (CRL5) E3 ubiquitin-protein ligase complexes by mediating ubiquitination and degradation of Elongin-C (ELOC) component of CRL5 complexes. Required for ubiquitination of cyclin E (CCNE1 or CCNE2), and consequently, normal G1 cell cycle progression. Component of the DCX(WDR77) complex, which mediates ubiquitination and degradation of Irgm1 in intestinal cells. Regulates the mammalian target-of-rapamycin (mTOR) pathway involved in control of cell growth, size and metabolism. Specific CUL4B regulation of the mTORC1-mediated pathway is dependent upon 26S proteasome function and requires interaction between CUL4B and MLST8. With CUL4A, contributes to ribosome biogenesis. The chain is Cullin-4B from Mus musculus (Mouse).